Reading from the N-terminus, the 620-residue chain is 1-deoxy-D-xylulose-5-phosphate synthase (620 aa).

Thiamine diphosphate is bound by residues His-80 and 121-123 (GHS). Asp-152 serves as a coordination point for Mg(2+). Thiamine diphosphate is bound by residues 153-154 (GA), Asn-181, Tyr-288, and Glu-370. Asn-181 is a binding site for Mg(2+).

Belongs to the transketolase family. DXPS subfamily. Homodimer. The cofactor is Mg(2+). Thiamine diphosphate is required as a cofactor.

It catalyses the reaction D-glyceraldehyde 3-phosphate + pyruvate + H(+) = 1-deoxy-D-xylulose 5-phosphate + CO2. The protein operates within metabolic intermediate biosynthesis; 1-deoxy-D-xylulose 5-phosphate biosynthesis; 1-deoxy-D-xylulose 5-phosphate from D-glyceraldehyde 3-phosphate and pyruvate: step 1/1. Functionally, catalyzes the acyloin condensation reaction between C atoms 2 and 3 of pyruvate and glyceraldehyde 3-phosphate to yield 1-deoxy-D-xylulose-5-phosphate (DXP). The sequence is that of 1-deoxy-D-xylulose-5-phosphate synthase from Shigella dysenteriae serotype 1 (strain Sd197).